Reading from the N-terminus, the 86-residue chain is Large ribosomal subunit protein bL31B (86 aa).

Belongs to the bacterial ribosomal protein bL31 family. Type B subfamily. Part of the 50S ribosomal subunit.

This Cupriavidus taiwanensis (strain DSM 17343 / BCRC 17206 / CCUG 44338 / CIP 107171 / LMG 19424 / R1) (Ralstonia taiwanensis (strain LMG 19424)) protein is Large ribosomal subunit protein bL31B.